The primary structure comprises 416 residues: Serine--tRNA ligase (416 aa).

232 to 234 (TAE) lines the L-serine pocket. 263–265 (RKE) is a binding site for ATP. Glu286 is a binding site for L-serine. ATP is bound at residue 350–353 (EISS). Ser384 contacts L-serine.

It belongs to the class-II aminoacyl-tRNA synthetase family. Type-1 seryl-tRNA synthetase subfamily. Homodimer. The tRNA molecule binds across the dimer.

The protein localises to the cytoplasm. The catalysed reaction is tRNA(Ser) + L-serine + ATP = L-seryl-tRNA(Ser) + AMP + diphosphate + H(+). It catalyses the reaction tRNA(Sec) + L-serine + ATP = L-seryl-tRNA(Sec) + AMP + diphosphate + H(+). Its pathway is aminoacyl-tRNA biosynthesis; selenocysteinyl-tRNA(Sec) biosynthesis; L-seryl-tRNA(Sec) from L-serine and tRNA(Sec): step 1/1. Catalyzes the attachment of serine to tRNA(Ser). Is also able to aminoacylate tRNA(Sec) with serine, to form the misacylated tRNA L-seryl-tRNA(Sec), which will be further converted into selenocysteinyl-tRNA(Sec). In Nautilia profundicola (strain ATCC BAA-1463 / DSM 18972 / AmH), this protein is Serine--tRNA ligase.